Consider the following 367-residue polypeptide: tRNA-specific 2-thiouridylase MnmA (367 aa).

ATP is bound by residues 11 to 18 and Leu-37; that span reads GLSGGVDS. The active-site Nucleophile is the Cys-99. An intrachain disulfide couples Cys-99 to Cys-195. Gly-123 contacts ATP. Positions 145-147 are interaction with tRNA; that stretch reads KDQ. Cys-195 functions as the Cysteine persulfide intermediate in the catalytic mechanism. The segment at 304-305 is interaction with tRNA; that stretch reads RY.

The protein belongs to the MnmA/TRMU family.

The protein localises to the cytoplasm. The enzyme catalyses S-sulfanyl-L-cysteinyl-[protein] + uridine(34) in tRNA + AH2 + ATP = 2-thiouridine(34) in tRNA + L-cysteinyl-[protein] + A + AMP + diphosphate + H(+). Catalyzes the 2-thiolation of uridine at the wobble position (U34) of tRNA, leading to the formation of s(2)U34. This Chlorobium luteolum (strain DSM 273 / BCRC 81028 / 2530) (Pelodictyon luteolum) protein is tRNA-specific 2-thiouridylase MnmA.